Here is a 291-residue protein sequence, read N- to C-terminus: 4-hydroxy-tetrahydrodipicolinate synthase (291 aa).

Residue Thr-45 participates in pyruvate binding. The active-site Proton donor/acceptor is the Tyr-133. Lys-161 (schiff-base intermediate with substrate) is an active-site residue. Ile-203 contributes to the pyruvate binding site.

This sequence belongs to the DapA family. As to quaternary structure, homotetramer; dimer of dimers.

The protein localises to the cytoplasm. The enzyme catalyses L-aspartate 4-semialdehyde + pyruvate = (2S,4S)-4-hydroxy-2,3,4,5-tetrahydrodipicolinate + H2O + H(+). It functions in the pathway amino-acid biosynthesis; L-lysine biosynthesis via DAP pathway; (S)-tetrahydrodipicolinate from L-aspartate: step 3/4. Its function is as follows. Catalyzes the condensation of (S)-aspartate-beta-semialdehyde [(S)-ASA] and pyruvate to 4-hydroxy-tetrahydrodipicolinate (HTPA). The sequence is that of 4-hydroxy-tetrahydrodipicolinate synthase from Saccharophagus degradans (strain 2-40 / ATCC 43961 / DSM 17024).